We begin with the raw amino-acid sequence, 25 residues long: Gamma-conotoxin PiVIIA (25 aa).

Intrachain disulfides connect cysteine 1-cysteine 15, cysteine 8-cysteine 19, and cysteine 14-cysteine 24. 4-hydroxyproline is present on proline 4. Residues glutamate 13 and glutamate 20 each carry the 4-carboxyglutamate modification.

Belongs to the conotoxin O2 superfamily. Expressed by the venom duct.

It localises to the secreted. Micromolar concentrations of PiVIIA increase the magnitude of the macroscopic calcium current in DRG neurons from rat. An increase, even modest of the calcium current, may have a significant impact in the excitability and electrical activity of neurons, and may set up PiVIIA as a member of the pharmacological family of the gamma-conotoxins. The chain is Gamma-conotoxin PiVIIA from Conus princeps (Prince cone).